The sequence spans 196 residues: Golgi to ER traffic protein 1 (196 aa).

Over 1–10 (MFLDLHPYTI) the chain is Lumenal. Residues 11–30 (LVSIFIILLVKQIVGRIGKS) form a helical membrane-spanning segment. Residues 31-114 (TIQEFVWLLY…SIDKLANVLL (84 aa)) are Cytoplasmic-facing. Residues 76–114 (AKWTKLNRQADKLTSEIQKLNEEIRQSKASIDKLANVLL) adopt a coiled-coil conformation. A helical membrane pass occupies residues 115–135 (MVLTTLPIWVARIFFRKTHLF). At 136 to 159 (YLRSGIFPRYIEWVLALPFFPSGA) the chain is on the lumenal side. A helical transmembrane segment spans residues 160-176 (VGLTVWMFAANSVIHNV). Topologically, residues 177 to 196 (ISLVSFAFEKRVEKPVRQKK) are cytoplasmic.

Belongs to the WRB/GET1 family. As to quaternary structure, component of the Golgi to ER traffic (GET) complex, which is composed of GET1, GET2 and GET3. Within the complex, GET1 and GET2 form a heterotetramer which is stabilized by phosphatidylinositol binding and which binds to the GET3 homodimer.

It localises to the endoplasmic reticulum membrane. It is found in the golgi apparatus membrane. Functionally, required for the post-translational delivery of tail-anchored (TA) proteins to the endoplasmic reticulum. Together with GET2, acts as a membrane receptor for soluble GET3, which recognizes and selectively binds the transmembrane domain of TA proteins in the cytosol. The GET complex cooperates with the HDEL receptor ERD2 to mediate the ATP-dependent retrieval of resident ER proteins that contain a C-terminal H-D-E-L retention signal from the Golgi to the ER. This is Golgi to ER traffic protein 1 from Candida tropicalis (strain ATCC MYA-3404 / T1) (Yeast).